The chain runs to 486 residues: dTDP-4-dehydro-6-deoxy-alpha-D-glucopyranose 2,3-dehydratase (486 aa).

Residues Trp66, 149-153 (TRSNY), Ser187, Trp304, Arg367, 383-385 (QCS), 388-389 (NY), and 421-424 (EGGR) each bind dTDP-4-dehydro-6-deoxy-alpha-D-glucose.

This sequence belongs to the hexose 2,3-dehydratase family. Homodimer.

It catalyses the reaction dTDP-4-dehydro-6-deoxy-alpha-D-glucose = dTDP-3,4-didehydro-2,6-dideoxy-alpha-D-glucose + H2O. In terms of biological role, involved in the biosynthesis of forosamine ((4-dimethylamino)-2,3,4,6-tetradeoxy-alpha-D-threo-hexopyranose), a highly deoxygenated sugar component of several bioactive natural products such as the insecticidal spinosyns A and D. Catalyzes the removal of the hydroxyl group at position C-2 of the hexose ring of dTDP-4-dehydro-6-deoxy-alpha-D-glucopyranose, and the oxidation of the hydroxyl group at position C-3 to form a carbonyl functionality. The product of the reaction, dTDP-2,6-dideoxy-D-glycero-hex-2-enos-4-ulose, is a highly unstable diketosugar, which spontaneously forms dTDP-3,4-didehydro-2,6-dideoxy-alpha-D-glucose. This is dTDP-4-dehydro-6-deoxy-alpha-D-glucopyranose 2,3-dehydratase from Saccharopolyspora spinosa.